Here is a 123-residue protein sequence, read N- to C-terminus: Probable U6 snRNA-associated Sm-like protein LSm4 (123 aa).

One can recognise a Sm domain in the interval 3 to 76; that stretch reads LPLSLLKTAQ…IKYLRIPETV (74 aa). Basic and acidic residues predominate over residues 85–97; that stretch reads NEVRRQQQREQSR. Positions 85–123 are disordered; the sequence is NEVRRQQQREQSRGRGGGRGGRGGHRGGGGNRGGRGGAR. Gly residues predominate over residues 98–123; it reads GRGGGRGGRGGHRGGGGNRGGRGGAR.

The protein belongs to the snRNP Sm proteins family. As to quaternary structure, component of the precatalytic spliceosome (spliceosome B complex). Component of the U4/U6-U5 tri-snRNP complex, a building block of the precatalytic spliceosome (spliceosome B complex). LSM2, LSM3, LSM4, LSM5, LSM6, LSM7 and LSM8 form a heptameric, ring-shaped subcomplex (the LSM2-8 complex) that is part of the U4/U6-U5 tri-snRNP complex and the precatalytic spliceosome.

The protein localises to the nucleus. In terms of biological role, plays a role in pre-mRNA splicing as component of the U4/U6-U5 tri-snRNP complex that is involved in spliceosome assembly, and as component of the precatalytic spliceosome (spliceosome B complex). The heptameric LSM2-8 complex binds specifically to the 3'-terminal U-tract of U6 snRNA. In Caenorhabditis elegans, this protein is Probable U6 snRNA-associated Sm-like protein LSm4 (lsm-4).